Reading from the N-terminus, the 236-residue chain is NAD(P)H-hydrate epimerase (236 aa).

In terms of domain architecture, YjeF N-terminal spans 11 to 217; sequence AAALDQELMS…AIASKYGFEV (207 aa). 61–65 contributes to the (6S)-NADPHX binding site; that stretch reads NNGGD. 2 residues coordinate K(+): Asn-62 and Asp-123. Residues 127-133 and Asp-156 each bind (6S)-NADPHX; that span reads GFSFSGE. Ser-159 serves as a coordination point for K(+).

Belongs to the NnrE/AIBP family. K(+) serves as cofactor.

Its subcellular location is the cytoplasm. The protein localises to the mitochondrion. It carries out the reaction (6R)-NADHX = (6S)-NADHX. It catalyses the reaction (6R)-NADPHX = (6S)-NADPHX. Functionally, catalyzes the epimerization of the S- and R-forms of NAD(P)HX, a damaged form of NAD(P)H that is a result of enzymatic or heat-dependent hydration. This is a prerequisite for the S-specific NAD(P)H-hydrate dehydratase to allow the repair of both epimers of NAD(P)HX. The protein is NAD(P)H-hydrate epimerase of Fusarium vanettenii (strain ATCC MYA-4622 / CBS 123669 / FGSC 9596 / NRRL 45880 / 77-13-4) (Fusarium solani subsp. pisi).